A 185-amino-acid polypeptide reads, in one-letter code: Ribosome-recycling factor (185 aa).

The protein belongs to the RRF family.

It localises to the cytoplasm. Its function is as follows. Responsible for the release of ribosomes from messenger RNA at the termination of protein biosynthesis. May increase the efficiency of translation by recycling ribosomes from one round of translation to another. This Campylobacter jejuni subsp. jejuni serotype O:2 (strain ATCC 700819 / NCTC 11168) protein is Ribosome-recycling factor.